A 164-amino-acid chain; its full sequence is MTVTIEIAVDIPCPAWTEAMPDAEARCGRLAAIALGAVDLPDGVVELSIVLADDATVQGLNRDWRGKDQPTNVLSFASLDDEDAPVVPGAPLLLGDVILAFETCAAEAHDQGKTLADHFSHLVVHGVLHLLGYDHMDDEEAAEMEALETTLLAALGIDDPYGEQ.

Zn(2+)-binding residues include His125, His129, and His135.

This sequence belongs to the endoribonuclease YbeY family. It depends on Zn(2+) as a cofactor.

The protein resides in the cytoplasm. Single strand-specific metallo-endoribonuclease involved in late-stage 70S ribosome quality control and in maturation of the 3' terminus of the 16S rRNA. This Paramagnetospirillum magneticum (strain ATCC 700264 / AMB-1) (Magnetospirillum magneticum) protein is Endoribonuclease YbeY.